Here is an 87-residue protein sequence, read N- to C-terminus: Cytochrome c5 (87 aa).

Cys19, Cys22, His23, and Met63 together coordinate heme. A disulfide bridge links Cys69 with Cys72.

Belongs to the cytochrome c family. Homodimer. In terms of processing, binds 1 heme group per subunit.

Functionally, it is unreactive with cytochrome c reductase or oxidase but seems to function as an intermediate in nitrate respiration of facultative anaerobic pseudmonads. This Ectopseudomonas mendocina (Pseudomonas mendocina) protein is Cytochrome c5.